Reading from the N-terminus, the 417-residue chain is Serine hydroxymethyltransferase (417 aa).

(6S)-5,6,7,8-tetrahydrofolate contacts are provided by residues leucine 122 and 126 to 128 (GHL). Lysine 230 bears the N6-(pyridoxal phosphate)lysine mark. Position 355 to 357 (355 to 357 (SPF)) interacts with (6S)-5,6,7,8-tetrahydrofolate.

The protein belongs to the SHMT family. Homodimer. The cofactor is pyridoxal 5'-phosphate.

Its subcellular location is the cytoplasm. The enzyme catalyses (6R)-5,10-methylene-5,6,7,8-tetrahydrofolate + glycine + H2O = (6S)-5,6,7,8-tetrahydrofolate + L-serine. It functions in the pathway one-carbon metabolism; tetrahydrofolate interconversion. The protein operates within amino-acid biosynthesis; glycine biosynthesis; glycine from L-serine: step 1/1. In terms of biological role, catalyzes the reversible interconversion of serine and glycine with tetrahydrofolate (THF) serving as the one-carbon carrier. This reaction serves as the major source of one-carbon groups required for the biosynthesis of purines, thymidylate, methionine, and other important biomolecules. Also exhibits THF-independent aldolase activity toward beta-hydroxyamino acids, producing glycine and aldehydes, via a retro-aldol mechanism. This is Serine hydroxymethyltransferase from Francisella philomiragia subsp. philomiragia (strain ATCC 25017 / CCUG 19701 / FSC 153 / O#319-036).